The following is a 326-amino-acid chain: 5-dehydro-2-deoxygluconokinase (326 aa).

Belongs to the carbohydrate kinase PfkB family.

The catalysed reaction is 5-dehydro-2-deoxy-D-gluconate + ATP = 6-phospho-5-dehydro-2-deoxy-D-gluconate + ADP + H(+). Its pathway is polyol metabolism; myo-inositol degradation into acetyl-CoA; acetyl-CoA from myo-inositol: step 5/7. Its function is as follows. Catalyzes the phosphorylation of 5-dehydro-2-deoxy-D-gluconate (2-deoxy-5-keto-D-gluconate or DKG) to 6-phospho-5-dehydro-2-deoxy-D-gluconate (DKGP). The polypeptide is 5-dehydro-2-deoxygluconokinase (Shouchella clausii (strain KSM-K16) (Alkalihalobacillus clausii)).